Reading from the N-terminus, the 92-residue chain is Small ribosomal subunit protein bS20 (92 aa).

Basic residues predominate over residues 1 to 11 (MANIKSQKKRI). Positions 1 to 22 (MANIKSQKKRIRQNEKARLRNK) are disordered.

The protein belongs to the bacterial ribosomal protein bS20 family.

In terms of biological role, binds directly to 16S ribosomal RNA. This Thermobifida fusca (strain YX) protein is Small ribosomal subunit protein bS20.